Here is a 170-residue protein sequence, read N- to C-terminus: Shikimate kinase (170 aa).

An ATP-binding site is contributed by 11 to 16 (LSGKST). Ser-15 is a Mg(2+) binding site. Positions 33, 57, and 79 each coordinate substrate. Arg-119 contacts ATP. Arg-137 contacts substrate.

Belongs to the shikimate kinase family. As to quaternary structure, monomer. The cofactor is Mg(2+).

The protein resides in the cytoplasm. The catalysed reaction is shikimate + ATP = 3-phosphoshikimate + ADP + H(+). Its pathway is metabolic intermediate biosynthesis; chorismate biosynthesis; chorismate from D-erythrose 4-phosphate and phosphoenolpyruvate: step 5/7. Catalyzes the specific phosphorylation of the 3-hydroxyl group of shikimic acid using ATP as a cosubstrate. This is Shikimate kinase from Clostridium botulinum (strain ATCC 19397 / Type A).